An 848-amino-acid chain; its full sequence is Adenylate cyclase (848 aa).

Residues 1–535 (MYLYIETLKQ…DVSHHFPLRL (535 aa)) form a catalytic region. The interval 541–848 (KALYSPCEIR…DTPLLQQYFS (308 aa)) is regulatory. His609 is subject to Phosphohistidine; by CRR.

The protein belongs to the adenylyl cyclase class-1 family.

It localises to the cytoplasm. It catalyses the reaction ATP = 3',5'-cyclic AMP + diphosphate. The sequence is that of Adenylate cyclase (cyaA) from Escherichia coli O157:H7.